Here is a 249-residue protein sequence, read N- to C-terminus: 2,3-bisphosphoglycerate-dependent phosphoglycerate mutase (249 aa).

Substrate is bound by residues 9–16 (RHGQSQWN), 22–23 (TG), R61, 88–91 (ERHY), K99, 115–116 (RR), and 184–185 (GN). H10 acts as the Tele-phosphohistidine intermediate in catalysis. Residue E88 is the Proton donor/acceptor of the active site.

This sequence belongs to the phosphoglycerate mutase family. BPG-dependent PGAM subfamily. In terms of assembly, homodimer.

The catalysed reaction is (2R)-2-phosphoglycerate = (2R)-3-phosphoglycerate. Its pathway is carbohydrate degradation; glycolysis; pyruvate from D-glyceraldehyde 3-phosphate: step 3/5. In terms of biological role, catalyzes the interconversion of 2-phosphoglycerate and 3-phosphoglycerate. This chain is 2,3-bisphosphoglycerate-dependent phosphoglycerate mutase, found in Xanthomonas euvesicatoria pv. vesicatoria (strain 85-10) (Xanthomonas campestris pv. vesicatoria).